A 198-amino-acid chain; its full sequence is NAD(P)H dehydrogenase (quinone) (198 aa).

The Flavodoxin-like domain occupies 4-189; that stretch reads ILVLYYSMYG…SIARYQGEYV (186 aa). FMN is bound by residues 10–15 and 78–80; these read SMYGHI and TRF. Y12 lines the NAD(+) pocket. W98 serves as a coordination point for substrate. FMN contacts are provided by residues 113-118 and H133; that span reads STGTGG.

Belongs to the WrbA family. FMN is required as a cofactor.

It catalyses the reaction a quinone + NADH + H(+) = a quinol + NAD(+). The catalysed reaction is a quinone + NADPH + H(+) = a quinol + NADP(+). The sequence is that of NAD(P)H dehydrogenase (quinone) from Salmonella agona (strain SL483).